The following is a 289-amino-acid chain: Heme oxygenase 1, chloroplastic (289 aa).

Residues 1–64 (MAPAAASLTA…SASSSRRMVV (64 aa)) constitute a chloroplast transit peptide. His-96 serves as a coordination point for heme b.

The protein belongs to the heme oxygenase family.

The protein resides in the plastid. The protein localises to the chloroplast. The enzyme catalyses heme b + 3 reduced [NADPH--hemoprotein reductase] + 3 O2 = biliverdin IXalpha + CO + Fe(2+) + 3 oxidized [NADPH--hemoprotein reductase] + 3 H2O + H(+). Functionally, catalyzes the opening of the heme ring to form the open-chain tetrapyrrole biliverdin IX with the release of iron and carbon monoxide (CO). Is a key enzyme in the synthesis of the chromophore of the phytochrome family of plant photoreceptors. Essential for photoperiod response and repression of flowering through cytochromes that inhibit flowering by affecting both HD1 and EHD1 flowering pathways. In Oryza sativa subsp. japonica (Rice), this protein is Heme oxygenase 1, chloroplastic (HO1).